Consider the following 111-residue polypeptide: Putative protein YddJ (111 aa).

This chain is Putative protein YddJ (yddJ), found in Escherichia coli (strain K12).